The primary structure comprises 434 residues: UPF0597 protein CLB_1949 (434 aa).

It belongs to the UPF0597 family.

The chain is UPF0597 protein CLB_1949 from Clostridium botulinum (strain ATCC 19397 / Type A).